The chain runs to 100 residues: Large ribosomal subunit protein uL23 (100 aa).

Belongs to the universal ribosomal protein uL23 family. As to quaternary structure, part of the 50S ribosomal subunit. Contacts protein L29, and trigger factor when it is bound to the ribosome.

In terms of biological role, one of the early assembly proteins it binds 23S rRNA. One of the proteins that surrounds the polypeptide exit tunnel on the outside of the ribosome. Forms the main docking site for trigger factor binding to the ribosome. The chain is Large ribosomal subunit protein uL23 from Mycolicibacterium paratuberculosis (strain ATCC BAA-968 / K-10) (Mycobacterium paratuberculosis).